Reading from the N-terminus, the 226-residue chain is Putative N-acetylmannosamine-6-phosphate 2-epimerase 1 (226 aa).

Belongs to the NanE family.

It catalyses the reaction an N-acyl-D-glucosamine 6-phosphate = an N-acyl-D-mannosamine 6-phosphate. It participates in amino-sugar metabolism; N-acetylneuraminate degradation; D-fructose 6-phosphate from N-acetylneuraminate: step 3/5. Functionally, converts N-acetylmannosamine-6-phosphate (ManNAc-6-P) to N-acetylglucosamine-6-phosphate (GlcNAc-6-P). This Salmonella paratyphi A (strain ATCC 9150 / SARB42) protein is Putative N-acetylmannosamine-6-phosphate 2-epimerase 1.